A 352-amino-acid chain; its full sequence is Protein Wnt-2 (352 aa).

The signal sequence occupies residues 1-23 (MWKIHNKLLIYILWIMEIRLVSS). Intrachain disulfides connect Cys-65–Cys-76, Cys-115–Cys-123, Cys-125–Cys-148, Cys-196–Cys-210, Cys-198–Cys-205, Cys-281–Cys-312, Cys-297–Cys-307, Cys-311–Cys-351, Cys-327–Cys-342, Cys-329–Cys-339, and Cys-334–Cys-335. N-linked (GlcNAc...) asparagine glycans are attached at residues Asn-75 and Asn-119. A lipid anchor (O-palmitoleoyl serine; by PORCN) is attached at Ser-202.

The protein belongs to the Wnt family. Post-translationally, palmitoleoylated by porcupine. The lipid group functions as a sorting signal, targeting the ligand to polarized vesicles that transport Wnt2 to unique sites at the cell surface. Depalmitoleoylated by notum, leading to inhibit Wnt signaling pathway. As to expression, dynamic expression pattern during embryogenesis. Expression is predominantly segmented, with expression also seen in the limb primordia and presumptive gonads. In embryonic tracheal cells, expression is close to and dorsal to the tracheal placode.

It localises to the secreted. The protein resides in the extracellular space. The protein localises to the extracellular matrix. Binds as a ligand to a family of frizzled seven-transmembrane receptors and acts through a cascade of genes on the nucleus. Segment polarity protein. May function in gonadogenesis and limb development. Wg and Wnt2 have a role in the developing trachea and together are responsible for all dorsal trunk formation. The protein is Protein Wnt-2 (Wnt2) of Drosophila melanogaster (Fruit fly).